A 227-amino-acid chain; its full sequence is Ribonuclease 3 (227 aa).

One can recognise an RNase III domain in the interval 7-132 (LTAFMDRLGY…VIAAVYLDGG (126 aa)). Glutamate 45 contributes to the Mg(2+) binding site. Aspartate 49 is an active-site residue. Aspartate 118 and glutamate 121 together coordinate Mg(2+). Glutamate 121 is an active-site residue. The region spanning 157-226 (DAKTALQEWA…AKDLLAQLAG (70 aa)) is the DRBM domain.

The protein belongs to the ribonuclease III family. Homodimer. Mg(2+) serves as cofactor.

It localises to the cytoplasm. The catalysed reaction is Endonucleolytic cleavage to 5'-phosphomonoester.. In terms of biological role, digests double-stranded RNA. Involved in the processing of primary rRNA transcript to yield the immediate precursors to the large and small rRNAs (23S and 16S). Processes some mRNAs, and tRNAs when they are encoded in the rRNA operon. Processes pre-crRNA and tracrRNA of type II CRISPR loci if present in the organism. The chain is Ribonuclease 3 from Jannaschia sp. (strain CCS1).